The sequence spans 210 residues: Stress-response A/B barrel domain-containing protein DABB1 (210 aa).

2 consecutive Stress-response A/B barrel domains span residues 5-100 and 116-204; these read VEHV…AVDW and IGKI…VVEF.

Homodimer.

It is found in the cytoplasm. The protein resides in the cytosol. In terms of biological role, involved in defense against fungal pathogens. Possesses antifungal activity against diverse pathogenic fungi. The chain is Stress-response A/B barrel domain-containing protein DABB1 from Arabidopsis thaliana (Mouse-ear cress).